Here is a 105-residue protein sequence, read N- to C-terminus: U-scoloptoxin(16)-Sm4a (105 aa).

The signal sequence occupies residues 1–22 (MWALTVFVTILAAAIPITGVTG).

This sequence belongs to the scoloptoxin-16 family. Contains 4 disulfide bonds. As to expression, expressed by the venom gland.

Its subcellular location is the secreted. The chain is U-scoloptoxin(16)-Sm4a from Scolopendra morsitans (Tanzanian blue ringleg centipede).